A 529-amino-acid chain; its full sequence is Probable threonine/serine exporter (529 aa).

A run of 10 helical transmembrane segments spans residues 88–108 (ITVT…PVTI), 168–188 (FALG…LAAV), 212–232 (VFGA…AGQD), 234–254 (TALV…VGSM), 265–285 (ALAR…GILI), 312–332 (MPLP…CLTI), 344–364 (AGLS…AGFG), 365–385 (RVVA…LISI), 389–409 (APAL…LAVF), and 428–448 (LLEA…GEFL). Positions 482 to 501 (QPAKSQQPTGTGGQRWRSVA) are disordered.

Belongs to the ThrE exporter (TC 2.A.79) family.

Its subcellular location is the cell membrane. The catalysed reaction is L-threonine(in) + H(+)(out) = L-threonine(out) + H(+)(in). Functionally, catalyzes the export of L-threonine and L-serine from the cell to the extracellular environment. Export is dependent on the proton motive force. Required for in vitro growth and survival of bacteria inside macrophages. Increased expression is associated with low-level amikacin (AMK) resistance. This is Probable threonine/serine exporter from Mycobacterium tuberculosis (strain ATCC 25618 / H37Rv).